The sequence spans 123 residues: D-ribose pyranase (123 aa).

The active-site Proton donor is His-20. Substrate is bound by residues Asp-28, His-90, and 112 to 114; that span reads YAN.

It belongs to the RbsD / FucU family. RbsD subfamily. In terms of assembly, homodecamer.

It is found in the cytoplasm. The enzyme catalyses beta-D-ribopyranose = beta-D-ribofuranose. It participates in carbohydrate metabolism; D-ribose degradation; D-ribose 5-phosphate from beta-D-ribopyranose: step 1/2. Its function is as follows. Catalyzes the interconversion of beta-pyran and beta-furan forms of D-ribose. This is D-ribose pyranase from Corynebacterium glutamicum (strain R).